A 222-amino-acid chain; its full sequence is Imidazoleglycerol-phosphate dehydratase (222 aa).

It belongs to the imidazoleglycerol-phosphate dehydratase family.

It catalyses the reaction D-erythro-1-(imidazol-4-yl)glycerol 3-phosphate = 3-(imidazol-4-yl)-2-oxopropyl phosphate + H2O. It participates in amino-acid biosynthesis; L-histidine biosynthesis; L-histidine from 5-phospho-alpha-D-ribose 1-diphosphate: step 6/9. This is Imidazoleglycerol-phosphate dehydratase (HIS3) from Scheffersomyces stipitis (strain ATCC 58785 / CBS 6054 / NBRC 10063 / NRRL Y-11545) (Yeast).